Here is a 645-residue protein sequence, read N- to C-terminus: Cysteine-rich receptor-like protein kinase 10 (645 aa).

The signal sequence occupies residues 1–27 (MSMACYYLAAAAAGLALLLLHAPLTDA). 2 consecutive Gnk2-homologous domains span residues 28 to 132 (QTLV…NDAF) and 140 to 251 (SQGM…VYPF). Topologically, residues 28 to 283 (QTLVPLCGDS…AGERSKNKRS (256 aa)) are extracellular. N-linked (GlcNAc...) asparagine glycosylation is found at asparagine 39 and asparagine 91. Disulfide bonds link cysteine 86-cysteine 95 and cysteine 98-cysteine 123. Asparagine 151 and asparagine 169 each carry an N-linked (GlcNAc...) asparagine glycan. 2 cysteine pairs are disulfide-bonded: cysteine 204–cysteine 213 and cysteine 216–cysteine 242. The helical transmembrane segment at 284–304 (AILAISMPTIALVLATIAAWF) threads the bilayer. Residues 305-645 (CSTSWRRRRL…WVQEIGATAS (341 aa)) lie on the Cytoplasmic side of the membrane. The region spanning 348 to 619 (FSEHKRLGEG…PLMSAVNAML (272 aa)) is the Protein kinase domain. ATP contacts are provided by residues 354–362 (LGEGGFGVV) and lysine 376. Residue aspartate 473 is the Proton acceptor of the active site.

It belongs to the protein kinase superfamily. Ser/Thr protein kinase family. CRK subfamily.

It is found in the membrane. Its function is as follows. Involved in disease resistance. Required for NPR1/NH1-mediated immunity to the bacterial blight pathogen Xanthomomas oryzae pv. oryzae (Xoo). Required for the benzothiadiazole (BTH)-induced immune response. Probably regulated by the transcription factor TGA2.1. This Oryza sativa subsp. japonica (Rice) protein is Cysteine-rich receptor-like protein kinase 10.